A 108-amino-acid chain; its full sequence is Small ribosomal subunit protein eS25A (108 aa).

A compositionally biased stretch (low complexity) spans 1-20 (MPPKQQLSKAAKAAAALAGG). Residues 1-30 (MPPKQQLSKAAKAAAALAGGKKSKKKWSKK) form a disordered region. N,N-dimethylproline; by NTM1 is present on proline 2. A compositionally biased stretch (basic residues) spans 21–30 (KKSKKKWSKK).

This sequence belongs to the eukaryotic ribosomal protein eS25 family. Component of the small ribosomal subunit (SSU). Mature yeast ribosomes consist of a small (40S) and a large (60S) subunit. The 40S small subunit contains 1 molecule of ribosomal RNA (18S rRNA) and 33 different proteins (encoded by 57 genes). The large 60S subunit contains 3 rRNA molecules (25S, 5.8S and 5S rRNA) and 46 different proteins (encoded by 81 genes).

It is found in the cytoplasm. Component of the ribosome, a large ribonucleoprotein complex responsible for the synthesis of proteins in the cell. The small ribosomal subunit (SSU) binds messenger RNAs (mRNAs) and translates the encoded message by selecting cognate aminoacyl-transfer RNA (tRNA) molecules. The large subunit (LSU) contains the ribosomal catalytic site termed the peptidyl transferase center (PTC), which catalyzes the formation of peptide bonds, thereby polymerizing the amino acids delivered by tRNAs into a polypeptide chain. The nascent polypeptides leave the ribosome through a tunnel in the LSU and interact with protein factors that function in enzymatic processing, targeting, and the membrane insertion of nascent chains at the exit of the ribosomal tunnel. This is Small ribosomal subunit protein eS25A from Saccharomyces cerevisiae (strain ATCC 204508 / S288c) (Baker's yeast).